A 137-amino-acid chain; its full sequence is MKGLLTLAWFLACSVPAVPGGLLELKSMIEKVTGKNAFKNYGFYGCYCGWGGRGTPKDGTDWCCQMHDRCYGQLEEKDCAIRTQSYDYRYTNGLVICEHDSFCPMRLCACDRKLVYCLRRNLWTYNPLYQYYPNFLC.

The signal sequence occupies residues 1–20 (MKGLLTLAWFLACSVPAVPG). 6 cysteine pairs are disulfide-bonded: Cys46/Cys137, Cys48/Cys64, Cys63/Cys117, Cys70/Cys110, Cys79/Cys103, and Cys97/Cys108. The Ca(2+) site is built by Tyr47, Gly49, and Gly51. His67 is an active-site residue. Asp68 lines the Ca(2+) pocket. Asp111 is an active-site residue.

The protein belongs to the phospholipase A2 family. The cofactor is Ca(2+). This enzyme lacks one of the seven disulfide bonds found in similar PA2 proteins. In terms of tissue distribution, expressed in peritoneal macrophages (at protein level). Expressed in heart, skeletal muscle and white adipose tissue.

It is found in the secreted. Its subcellular location is the cell membrane. The protein localises to the cytoplasmic vesicle. It localises to the phagosome. The protein resides in the recycling endosome. It is found in the golgi apparatus. Its subcellular location is the cis-Golgi network. The protein localises to the trans-Golgi network. It carries out the reaction a 1,2-diacyl-sn-glycero-3-phosphocholine + H2O = a 1-acyl-sn-glycero-3-phosphocholine + a fatty acid + H(+). The enzyme catalyses 1-hexadecanoyl-2-(9Z-octadecenoyl)-sn-glycero-3-phosphocholine + H2O = 1-hexadecanoyl-sn-glycero-3-phosphocholine + (9Z)-octadecenoate + H(+). It catalyses the reaction 1-hexadecanoyl-2-(5Z,8Z,11Z,14Z-eicosatetraenoyl)-sn-glycero-3-phosphocholine + H2O = 1-hexadecanoyl-sn-glycero-3-phosphocholine + (5Z,8Z,11Z,14Z)-eicosatetraenoate + H(+). The catalysed reaction is 1-hexadecanoyl-2-(9Z,12Z-octadecadienoyl)-sn-glycero-3-phosphoethanolamine + H2O = 1-hexadecanoyl-sn-glycero-3-phosphoethanolamine + (9Z,12Z)-octadecadienoate + H(+). It carries out the reaction 1-hexadecanoyl-2-(5Z,8Z,11Z,14Z-eicosatetraenoyl)-sn-glycero-3-phosphoethanolamine + H2O = 1-hexadecanoyl-sn-glycero-3-phosphoethanolamine + (5Z,8Z,11Z,14Z)-eicosatetraenoate + H(+). The enzyme catalyses 1-octadecanoyl-2-(5Z,8Z,11Z,14Z-eicosatetraenoyl)-sn-glycero-3-phospho-(1D-myo-inositol) + H2O = 1-octadecanoyl-sn-glycero-3-phospho-(1D-myo-inositol) + (5Z,8Z,11Z,14Z)-eicosatetraenoate + H(+). It catalyses the reaction 1-hexadecanoyl-2-(9Z-octadecenoyl)-sn-glycero-3-phosphoglycerol + H2O = 1-hexadecanoyl-sn-glycero-3-phosphoglycerol + (9Z)-octadecenoate + H(+). The catalysed reaction is N-hexadecanoyl-1,2-di-(9Z-octadecenoyl)-sn-glycero-3-phosphoethanolamine + H2O = N-hexadecanoyl-1-(9Z-octadecenoyl)-sn-glycero-3-phosphoethanolamine + (9Z)-octadecenoate + H(+). It carries out the reaction 1'-[1,2-di-(9Z-octadecenoyl)-sn-glycero-3-phospho]-3'-[1-(9Z-octadecenoyl)-sn-glycero-3-phospho]-glycerol + H2O = 1',3'-bis-[1-(9Z-octadecenoyl)-sn-glycero-3-phospho]-glycerol + (9Z)-octadecenoate + H(+). The enzyme catalyses 1',3'-bis[1,2-di-(9Z-octadecenoyl)-sn-glycero-3-phospho]-glycerol + H2O = 1'-[1,2-di-(9Z-octadecenoyl)-sn-glycero-3-phospho]-3'-[1-(9Z-octadecenoyl)-sn-glycero-3-phospho]-glycerol + (9Z)-octadecenoate + H(+). It participates in lipid metabolism; phospholipid metabolism. It functions in the pathway lipid metabolism; leukotriene B4 biosynthesis. Its pathway is lipid metabolism; leukotriene C4 biosynthesis. Functionally, secretory calcium-dependent phospholipase A2 that primarily targets extracellular phospholipids. Hydrolyzes the ester bond of the fatty acyl group attached at sn-2 position of phospholipids (phospholipase A2 activity), preferentially releasing fatty acyl groups with a low degree of unsaturation such as oleoyl (C18:1) and linoleoyl (C18:2) groups. Hydrolyzes low-density lipoprotein (LDL) phospholipids releasing unsaturated fatty acids that drive macrophage polarization toward an M2 phenotype. May act in an autocrine and paracrine manner. Contributes to lipid remodeling of cellular membranes at different subcellular locations and generation of lipid mediators involved in pathogen clearance. Cleaves sn-2 fatty acyl chains of cardiolipin, a major component of the inner membrane of mitochondria and bacterial membranes. Promotes phagocytosis of bacteria in macrophages through production of lysophosphatidylethanolamines. Displays bactericidal activity against Gram-positive bacteria by directly hydrolyzing the phospholipids of the bacterial membrane. Promotes phagocytosis and killing of ingested fungi likely through controlling phagosome-lysosome fusion and phagosome maturation. Plays a role in biosynthesis of cysteinyl leukotrienes (CysLTs) in myeloid cells. In eosinophils, triggers perinuclear arachidonate release and LTC4 synthesis in a PLA2G4A-independent way. In neutrophils, amplifies CysLTs biosynthesis initiated by PLA2G4A. Promotes immune complex clearance in macrophages via stimulating synthesis of CysLTs, which act through CYSLTR1 to trigger phagocytosis. May regulate antigen processing in antigen-presenting cells. In pulmonary macrophages regulates IL33 production required for activation of group 2 innate lymphoid cells. May play a role in the biosynthesis of N-acyl ethanolamines that regulate energy metabolism. Hydrolyzes N-acyl phosphatidylethanolamines to N-acyl lysophosphatidylethanolamines, which are further cleaved by a lysophospholipase D to release N-acyl ethanolamines. This Mus musculus (Mouse) protein is Phospholipase A2 group V (Pla2g5).